Reading from the N-terminus, the 483-residue chain is Regulatory protein ViaA (483 aa).

Belongs to the ViaA family. Homodimer. Interacts with RavA.

It is found in the cytoplasm. In terms of biological role, component of the RavA-ViaA chaperone complex, which may act on the membrane to optimize the function of some of the respiratory chains. ViaA stimulates the ATPase activity of RavA. In Shigella flexneri serotype 5b (strain 8401), this protein is Regulatory protein ViaA.